The chain runs to 216 residues: Cell envelope integrity protein Cei (216 aa).

The chain crosses the membrane as a helical span at residues 25–45; that stretch reads PAIVVVAFLVVVTCVMWTLAL.

It localises to the cell membrane. Functionally, contributes to cell envelope integrity and virulence. The polypeptide is Cell envelope integrity protein Cei (Mycobacterium tuberculosis (strain ATCC 25618 / H37Rv)).